The following is a 165-amino-acid chain: Deoxyuridine 5'-triphosphate nucleotidohydrolase (165 aa).

Belongs to the dUTPase family. Homotrimer. Mg(2+) is required as a cofactor.

The protein localises to the host cytoplasm. It localises to the virion. The enzyme catalyses dUTP + H2O = dUMP + diphosphate + H(+). In terms of biological role, the viral dUTPase may play a role in lowering the dUTP concentration in natural infections to minimize misincorporation of deoxyuridine into the viral DNA and ensure the fidelity of genome replication. This is Deoxyuridine 5'-triphosphate nucleotidohydrolase from African swine fever virus (isolate Tick/South Africa/Pretoriuskop Pr4/1996) (ASFV).